We begin with the raw amino-acid sequence, 147 residues long: Transcription antitermination protein NusB (147 aa).

Belongs to the NusB family.

Involved in transcription antitermination. Required for transcription of ribosomal RNA (rRNA) genes. Binds specifically to the boxA antiterminator sequence of the ribosomal RNA (rrn) operons. This is Transcription antitermination protein NusB from Teredinibacter turnerae (strain ATCC 39867 / T7901).